The chain runs to 797 residues: G-type lectin S-receptor-like serine/threonine-protein kinase SD2-2 (797 aa).

Positions Met-1–Ser-23 are cleaved as a signal peptide. The region spanning Lys-24 to Asp-139 is the Bulb-type lectin domain. Residues Lys-24 to Ser-401 lie on the Extracellular side of the membrane. Asn-30, Asn-49, Asn-150, and Asn-197 each carry an N-linked (GlcNAc...) asparagine glycan. The region spanning Pro-274–Ala-310 is the EGF-like; atypical domain. Cystine bridges form between Cys-278–Cys-290, Cys-284–Cys-298, Cys-359–Cys-381, and Cys-363–Cys-369. Residues Cys-321–Ser-407 form the PAN domain. N-linked (GlcNAc...) asparagine glycans are attached at residues Asn-366 and Asn-397. The helical transmembrane segment at Ile-402 to Pro-422 threads the bilayer. Topologically, residues Leu-423 to Pro-797 are cytoplasmic. The Protein kinase domain occupies Asn-461–Val-742. Residues Val-467–Val-475 and Lys-490 contribute to the ATP site. Residues Ser-550–Thr-566 form a caM-binding region. The active-site Proton acceptor is the Asp-585. Residues Gly-767–Pro-797 form a disordered region. Positions Ser-784 to Pro-797 are enriched in low complexity.

This sequence belongs to the protein kinase superfamily. Ser/Thr protein kinase family. Post-translationally, autophosphorylated. Expressed in the shoot apex and roots, specifically in lateral roots and at the root-hypocotyl transition zone.

It localises to the cell membrane. It carries out the reaction L-seryl-[protein] + ATP = O-phospho-L-seryl-[protein] + ADP + H(+). The enzyme catalyses L-threonyl-[protein] + ATP = O-phospho-L-threonyl-[protein] + ADP + H(+). Its function is as follows. Serine/threonine-protein kinase. The polypeptide is G-type lectin S-receptor-like serine/threonine-protein kinase SD2-2 (SD22) (Arabidopsis thaliana (Mouse-ear cress)).